We begin with the raw amino-acid sequence, 158 residues long: SsrA-binding protein (158 aa).

It belongs to the SmpB family.

It localises to the cytoplasm. Functionally, required for rescue of stalled ribosomes mediated by trans-translation. Binds to transfer-messenger RNA (tmRNA), required for stable association of tmRNA with ribosomes. tmRNA and SmpB together mimic tRNA shape, replacing the anticodon stem-loop with SmpB. tmRNA is encoded by the ssrA gene; the 2 termini fold to resemble tRNA(Ala) and it encodes a 'tag peptide', a short internal open reading frame. During trans-translation Ala-aminoacylated tmRNA acts like a tRNA, entering the A-site of stalled ribosomes, displacing the stalled mRNA. The ribosome then switches to translate the ORF on the tmRNA; the nascent peptide is terminated with the 'tag peptide' encoded by the tmRNA and targeted for degradation. The ribosome is freed to recommence translation, which seems to be the essential function of trans-translation. The polypeptide is SsrA-binding protein (Symbiobacterium thermophilum (strain DSM 24528 / JCM 14929 / IAM 14863 / T)).